A 265-amino-acid chain; its full sequence is Mlc titration factor A (265 aa).

Zn(2+)-binding residues include H111, H148, H152, and E211.

Belongs to the MtfA family. In terms of assembly, interacts with Mlc. Zn(2+) serves as cofactor.

The protein resides in the cytoplasm. Involved in the modulation of the activity of the glucose-phosphotransferase system (glucose-PTS). Interacts with the transcriptional repressor Mlc, preventing its interaction with DNA and leading to the modulation of expression of genes regulated by Mlc, including ptsG, which encodes the PTS system glucose-specific EIICB component. Its function is as follows. Shows zinc-dependent metallopeptidase activity. This chain is Mlc titration factor A, found in Salmonella typhi.